The chain runs to 547 residues: 2-succinyl-5-enolpyruvyl-6-hydroxy-3-cyclohexene-1-carboxylate synthase (547 aa).

This sequence belongs to the TPP enzyme family. MenD subfamily. In terms of assembly, homodimer. It depends on Mg(2+) as a cofactor. Mn(2+) serves as cofactor. Thiamine diphosphate is required as a cofactor.

It catalyses the reaction isochorismate + 2-oxoglutarate + H(+) = 5-enolpyruvoyl-6-hydroxy-2-succinyl-cyclohex-3-ene-1-carboxylate + CO2. Its pathway is quinol/quinone metabolism; 1,4-dihydroxy-2-naphthoate biosynthesis; 1,4-dihydroxy-2-naphthoate from chorismate: step 2/7. It functions in the pathway quinol/quinone metabolism; menaquinone biosynthesis. In terms of biological role, catalyzes the thiamine diphosphate-dependent decarboxylation of 2-oxoglutarate and the subsequent addition of the resulting succinic semialdehyde-thiamine pyrophosphate anion to isochorismate to yield 2-succinyl-5-enolpyruvyl-6-hydroxy-3-cyclohexene-1-carboxylate (SEPHCHC). The polypeptide is 2-succinyl-5-enolpyruvyl-6-hydroxy-3-cyclohexene-1-carboxylate synthase (Mycobacterium sp. (strain JLS)).